The sequence spans 312 residues: Protoheme IX farnesyltransferase (312 aa).

Helical transmembrane passes span 31 to 51, 52 to 72, 119 to 139, 152 to 172, 179 to 199, 225 to 245, 247 to 267, and 288 to 308; these read VMSLVVFTALVGLLMAPGSFH, PVLAITAIICIAVGGGAAGAL, ILVNWIAAGLLAFTIFFYVVI, IVIGGAAGALPPVVAWASVTG, ILLFLIIFFWTPPHFWALALF, ILLYTVALVAVAAAPWPLGYF, VIYGVASLALGGWMLVLAVRV, and ILYLFALFAILLVEVVAAAVL.

This sequence belongs to the UbiA prenyltransferase family. Protoheme IX farnesyltransferase subfamily.

The protein resides in the cell inner membrane. The catalysed reaction is heme b + (2E,6E)-farnesyl diphosphate + H2O = Fe(II)-heme o + diphosphate. It participates in porphyrin-containing compound metabolism; heme O biosynthesis; heme O from protoheme: step 1/1. Its function is as follows. Converts heme B (protoheme IX) to heme O by substitution of the vinyl group on carbon 2 of heme B porphyrin ring with a hydroxyethyl farnesyl side group. This is Protoheme IX farnesyltransferase from Rhodopseudomonas palustris (strain ATCC BAA-98 / CGA009).